The chain runs to 116 residues: Ly-6/neurotoxin-like protein 1 (116 aa).

An N-terminal signal peptide occupies residues 1–20 (MTPLLTLILVVLMGLPLAQA). Residues 21-107 (LDCHVCAYNG…TPATLALAPI (87 aa)) enclose the UPAR/Ly6 domain. 5 disulfides stabilise this stretch: Cys-23–Cys-46, Cys-26–Cys-33, Cys-39–Cys-64, Cys-68–Cys-85, and Cys-86–Cys-91. A lipid anchor (GPI-anchor amidated cysteine) is attached at Cys-91. The propeptide at 92 to 116 (NGTGLATPATLALAPILLATLWGLL) is removed in mature form.

Interacts with nAChRs containing alpha-4:beta-2 (CHRNA4:CHRNB2) and alpha-7 (CHRNA7) subunits. Interacts with CHRNA4 probably in the endoplasmic reticulum prior to nAChR pentameric assembly. Interacts with KCNA2/Potassium voltage-gated channel subfamily A member 2.

The protein resides in the cell membrane. Its subcellular location is the cell projection. It is found in the dendrite. It localises to the endoplasmic reticulum. Its function is as follows. Acts in different tissues through interaction to nicotinic acetylcholine receptors (nAChRs). The proposed role as modulator of nAChR activity seems to be dependent on the nAChR subtype and stoichiometry, and to involve an effect on nAChR trafficking and its cell surface expression, and on single channel properties of the nAChR inserted in the plasma membrane. Modulates functional properties of nicotinic acetylcholine receptors (nAChRs) to prevent excessive excitation, and hence neurodegeneration. Enhances desensitization by increasing both the rate and extent of desensitization of alpha-4:beta-2-containing nAChRs and slowing recovery from desensitization. Promotes large amplitude ACh-evoked currents through alpha-4:beta-2 nAChRs. Is involved in regulation of the nAChR pentameric assembly in the endoplasmic reticulum. Shifts stoichiometry from high sensitivity alpha-4(2):beta-2(3) to low sensitivity alpha-4(3):beta-2(2) nAChR. In vitro modulates alpha-3:beta-4-containing nAChRs. Reduces cell surface expression of (alpha-3:beta-4)(2):beta-4 and (alpha-3:beta-4)(2):alpha-5 nAChRs suggesting an interaction with nAChR alpha-3(-):(+)beta-4 subunit interfaces and an allosteric mode. Corresponding single channel effects characterized by decreased unitary conductance, altered burst proportions and enhanced desensitization/inactivation seem to depend on nAChR alpha:alpha subunit interfaces and are greater in (alpha-3:beta-2)(2):alpha-3 when compared to (alpha-3:beta-2)(2):alpha-5 nAChRs. Prevents plasticity in the primary visual cortex late in life. The sequence is that of Ly-6/neurotoxin-like protein 1 from Homo sapiens (Human).